Reading from the N-terminus, the 252-residue chain is MITKRIIPCLDVKDGRVVKGVQFVQLRDAGDPVELAKFYDKQGADELVFLDISASHEGRKTMVEVVEKVAAQLAIPFTVGGGINSLDDMKTILRAGADKVSLNTAAVRNPNLITEGADFFGSQCIVVAIDAKYDETIGSWRVYTHGGRNATDLEVVEWAKEAVRRGAGEILLTSMDCDGEKNGFDIALTRTVSEAVSVPVIASGGAGNAKHFLEVFEKGKADAALAASIFHYKETSVKEVKAYLKERGVNIR.

Residues Asp11 and Asp130 contribute to the active site.

Belongs to the HisA/HisF family. In terms of assembly, heterodimer of HisH and HisF.

The protein localises to the cytoplasm. It carries out the reaction 5-[(5-phospho-1-deoxy-D-ribulos-1-ylimino)methylamino]-1-(5-phospho-beta-D-ribosyl)imidazole-4-carboxamide + L-glutamine = D-erythro-1-(imidazol-4-yl)glycerol 3-phosphate + 5-amino-1-(5-phospho-beta-D-ribosyl)imidazole-4-carboxamide + L-glutamate + H(+). Its pathway is amino-acid biosynthesis; L-histidine biosynthesis; L-histidine from 5-phospho-alpha-D-ribose 1-diphosphate: step 5/9. Functionally, IGPS catalyzes the conversion of PRFAR and glutamine to IGP, AICAR and glutamate. The HisF subunit catalyzes the cyclization activity that produces IGP and AICAR from PRFAR using the ammonia provided by the HisH subunit. The chain is Imidazole glycerol phosphate synthase subunit HisF from Geobacillus sp. (strain WCH70).